The sequence spans 72 residues: N-alpha-acetyltransferase 38, NatC auxiliary subunit (72 aa).

Residues 3–72 enclose the Sm domain; that stretch reads NGEILLTSWL…KHIKSFSVRA (70 aa).

In terms of assembly, component of the N-terminal acetyltransferase C (NatC) complex, composed of the catalytic subunit Naa30, a large auxiliary subunit Naa35 and a small auxiliary subunit Naa38.

It localises to the endoplasmic reticulum. Its function is as follows. Component of the NatC N-terminal acetyltransferase, which associates with the ribosome to acetylate nascent protein chains in a cotranslational manner. NatC acetylates protein N-termini starting with methionine, followed by a hydrophobic or amphipathic amino acid, with amino acids at positions 3 and 4 also contributing to NatC recognition. The first 4 amino acids of cognate substrates are recognized at the Naa30-Naa35 interface. NatC-dependent acetylation targets various substrate proteins to specific subcellular sites. This is N-alpha-acetyltransferase 38, NatC auxiliary subunit (naa38) from Schizosaccharomyces pombe (strain 972 / ATCC 24843) (Fission yeast).